A 159-amino-acid chain; its full sequence is Dehydratase GME11372 (159 aa).

Catalysis depends on residues His79 and His104.

It belongs to the scytalone dehydratase family. Homotrimer. Each subunit contains an active site, located in the central part of the hydrophobic core of the monomer, which functions independently.

It functions in the pathway secondary metabolite biosynthesis. Functionally, dehydratase; part of the gene cluster that mediates the biosynthesis of dibenzodioxocinones such as pestalotiollide B, a novel class of inhibitors against cholesterol ester transfer protein (CEPT). The biosynthesis initiates from condensation of acetate and malonate units catalyzed by the non-reducing PKS pks8/GME11356. Pks8/GME11356 lacks a thioesterase (TE) domain, which is important to the cyclizing of the third ring of atrochrysone carboxylic acid, and the esterase GME11355 might play the role of TE and catalyzes the cyclization reaction of the C ring. The lactamase-like protein GME11357 (or other beta-lactamases in Pestalotiopsis microspora) probably hydrolyzes the thioester bond between the ACP of pks8/GME11356 and the intermediate to release atrochrysone carboxylic acid, which is spontaneously dehydrates to form endocrocin anthrone. Endocrocin anthrone is further converted to emodin via the endocrocin intermediate. Emodin is then oxidized by several enzymes such as the Baeyer-Villiger oxidase GME11358, the oxidoreductase GME11367, the short chain dehydrogenase/reductase GME11373, as well as by other oxidoreductases from the cluster, to modify the A and C rings and open the B ring, and finally yield monodictyphenone. The prenyltransferase GME11375 may catalyze the addition reaction between the C5 side chains and the carbon bone of dibenzodioxocinones. The remaining biochemical reactions to the final product dibenzodioxocinones should be methylation catalyzed by methyltransferase GME11366 and reduction and lactonization reaction catalyzed by a series of oxidordeuctases. This chain is Dehydratase GME11372, found in Pestalotiopsis microspora.